The chain runs to 358 residues: Cilia- and flagella-associated protein 263 (358 aa).

Coiled coils occupy residues 93–138 (YKKM…FKRN), 176–200 (RKNS…EMAE), and 266–343 (RTKL…YTKS).

The protein belongs to the CFAP263 family. As to quaternary structure, forms a complex with CFAP184; the interaction is required for functional activity in cilia. Interacts with HAP1 and PCM1.

It is found in the cytoplasm. It localises to the cytoskeleton. The protein resides in the microtubule organizing center. The protein localises to the centrosome. Its subcellular location is the centriolar satellite. It is found in the cell projection. It localises to the cilium. Component of centriolar satellites contributing to primary cilium formation. In complex with CFAP263, acts as a regulator of ciliary beating that connects radial spoke 3 (RS3) to the inner dynein arm (IDA) and the nexin-dynein regulatory complex (N-DRC). The complex is positioned parallel to N-DRC and forms a connection between the arch at the base of RS3, the IDA tail and N-DRC. This chain is Cilia- and flagella-associated protein 263 (cfap263), found in Danio rerio (Zebrafish).